Here is a 627-residue protein sequence, read N- to C-terminus: Druantia protein DruC (627 aa).

Its subcellular location is the cytoplasm. Component of antiviral defense system Druantia type I, composed of DruA, DruB, DruC, DruD and DruE. Expression of Druantia in E.coli (strain MG1655) confers resistance to phage lambda, SECphi18, SECphi27 and T4. The chain is Druantia protein DruC from Escherichia coli (strain UMEA 4076-1).